We begin with the raw amino-acid sequence, 341 residues long: Putative UPF0607 protein ENSP00000383144 (341 aa).

Disordered stretches follow at residues 70-131 and 218-279; these read RLPK…NPRP and LMVG…PPAK. The span at 72 to 101 shows a compositional bias: basic and acidic residues; sequence PKTEVRAEEPKEATEVKDQVETQEQEDNKR. Over residues 108–127 the composition is skewed to polar residues; the sequence is EAASTSRPLETQGNLTSSWY. Residues 243-252 are compositionally biased toward basic residues; the sequence is AGHRSHKRKL.

This sequence belongs to the UPF0607 family.

This is Putative UPF0607 protein ENSP00000383144 from Homo sapiens (Human).